The following is a 584-amino-acid chain: Optineurin (584 aa).

The tract at residues 1-32 (MSHQPLSCLTEKGDSPCETPGNGPSNMVHPSL) is disordered. A coiled-coil region spans residues 38-180 (EELLQQMKEL…VSELQLKLNS (143 aa)). An interaction with Rab8 region spans residues 58–219 (MKLNNQAMKG…TPTRTDPISL (162 aa)). The short motif at 186-191 (DSFVEI) is the LIR element. At Ser-187 the chain carries Phosphoserine. 2 coiled-coil regions span residues 243–278 (CLRE…HSST) and 307–511 (IQVT…DIEE). The segment covering 267–295 (DFEKKANGHSSTEKQTARRADREKEDKGQ) has biased composition (basic and acidic residues). The interval 267-302 (DFEKKANGHSSTEKQTARRADREKEDKGQESVGSEV) is disordered. Position 345 is a phosphoserine (Ser-345). The tract at residues 414-584 (TKQQAEKVDK…LQIHVMDCII (171 aa)) is interaction with HD. An interaction with MYO6 region spans residues 415 to 524 (KQQAEKVDKM…RQSLMEMQCR (110 aa)). A UBAN motif is present at residues 477–482 (DFHAER). The residue at position 530 (Ser-530) is a Phosphoserine. Residues 554-584 (PRSIPIHSCPKCGEVLPDIDTLQIHVMDCII) form a CCHC NOA-type zinc finger. Positions 562, 565, 578, and 582 each coordinate Zn(2+).

As to quaternary structure, self-associates. Interacts with HD, GTF3A, TRAF3, TBK1 and MYO6. Interacts (via UBAN) with ubiquitinated TFRC. Interacts with active GTP-bound Rab8 (RAB8A and/or RAB8B). Interacts with TBC1D17. Binds to linear ubiquitin chains. Interacts with LC3 family members MAP1LC3A, MAP1LC3B, GABARAP, GABARAPL1 and GABARAPL2; OPTN phosphorylation increases the association (at least with MAP1LC3B). Interacts with RAB12; the interaction may be indirect. Interacts with TBK1; this interaction leads to the Golgi localization of TBK1 and its subsequent activation. Interacts with palmitoyltransferase ZDHHC17/HIP14; the interaction does not lead to palmitoylation of OPTN. Interacts with CYLD. Interacts with TOM1; the interaction is indirect and is mediated by MYO6, which acts as a bridge between TOM1 and OPTN. Interacts with USP12; the interaction is independent of USP12 deubiquitinase activity and may be involved in regulation of autophagic flux. Post-translationally, phosphorylated by TBK1, leading to restrict bacterial proliferation in case of infection. In terms of tissue distribution, in eye, it is expressed in anterior segment, retina, and optic nerve blood vessels (at protein level). Highly expressed in adult liver, heart and testis.

Its subcellular location is the cytoplasm. The protein localises to the perinuclear region. The protein resides in the golgi apparatus. It is found in the trans-Golgi network. It localises to the cytoplasmic vesicle. Its subcellular location is the autophagosome. The protein localises to the recycling endosome. In terms of biological role, plays an important role in the maintenance of the Golgi complex, in membrane trafficking, in exocytosis, through its interaction with myosin VI and Rab8. Links myosin VI to the Golgi complex and plays an important role in Golgi ribbon formation. Plays a role in the activation of innate immune response during viral infection. Mechanistically, recruits TBK1 at the Golgi apparatus, promoting its trans-phosphorylation after RLR or TLR3 stimulation. In turn, activated TBK1 phosphorylates its downstream partner IRF3 to produce IFN-beta. Plays a neuroprotective role in the eye and optic nerve. May act by regulating membrane trafficking and cellular morphogenesis via a complex that contains Rab8 and huntingtin (HD). Mediates the interaction of Rab8 with the probable GTPase-activating protein TBC1D17 during Rab8-mediated endocytic trafficking, such as that of transferrin receptor (TFRC/TfR); regulates Rab8 recruitment to tubules emanating from the endocytic recycling compartment. Autophagy receptor that interacts directly with both the cargo to become degraded and an autophagy modifier of the MAP1 LC3 family; targets ubiquitin-coated bacteria (xenophagy), such as cytoplasmic Salmonella enterica, and appears to function in the same pathway as SQSTM1 and CALCOCO2/NDP52. The polypeptide is Optineurin (Optn) (Mus musculus (Mouse)).